Consider the following 707-residue polypeptide: Tryptophan synthase (707 aa).

The segment at 1–297 is tryptophan synthase alpha chain; it reads MSEQLRQTFA…VKKEILDEFD (297 aa). Residues glutamate 50 and aspartate 61 each act as proton acceptor in the active site. Positions 298-707 are tryptophan synthase beta chain; the sequence is ENHKHPIRFG…DLRFEEDPSA (410 aa). The residue at position 384 (lysine 384) is an N6-(pyridoxal phosphate)lysine. 2 positions are modified to phosphoserine: serine 540 and serine 683.

In the N-terminal section; belongs to the TrpA family. It in the C-terminal section; belongs to the TrpB family. The cofactor is pyridoxal 5'-phosphate.

The enzyme catalyses (1S,2R)-1-C-(indol-3-yl)glycerol 3-phosphate + L-serine = D-glyceraldehyde 3-phosphate + L-tryptophan + H2O. It functions in the pathway amino-acid biosynthesis; L-tryptophan biosynthesis; L-tryptophan from chorismate: step 5/5. The sequence is that of Tryptophan synthase (TRP5) from Saccharomyces cerevisiae (strain ATCC 204508 / S288c) (Baker's yeast).